Consider the following 436-residue polypeptide: YRLTYYTPDYQVAETDILAAFRMTPQPGVPAEECGAAVAAESSTGTWTTVWTDGLTQLDRYKGRCYDLEPVPGETNQYIAYVAYPIDLFEEGSVTNLLTSIVGNVFGFKALRALRLEDLRIPPAYVKTFWGPPHGIQVERDRLNKYGRPLLGCTIKPKLGLSAKNYGRAVYECLRGGLDFTKDDENVNSQSFMRWRDRFLFCAEAIYKAQSETGEVKGHYLNATAGTVEEMYKRAAFAAQLGVPIIMHDYLTGGFTANTSLAMYCRDNGLLLHIHRAMHAVIDRQRYHGIHFRVLAKTLRMSGGDHLHSGTVVGKLEGEREVTLGFVDLMRDAYVEKDRSRGIYFTQDWCGMGGTIPVASGGIHVWHMPALTEIFGDDACLQFGGGTLGHPWGNAPGAVANRVASEACVQARNEGRDLSREGGDVIREACKWSPEL.

2 residues coordinate substrate: Asn-104 and Thr-154. The Proton acceptor role is filled by Lys-156. Substrate is bound at residue Lys-158. Lys-182, Asp-184, and Glu-185 together coordinate Mg(2+). Lys-182 is subject to N6-carboxylysine. The Proton acceptor role is filled by His-275. Substrate-binding residues include Arg-276, His-308, and Ser-360.

It belongs to the RuBisCO large chain family. Type I subfamily. As to quaternary structure, heterohexadecamer of 8 large chains and 8 small chains. It depends on Mg(2+) as a cofactor.

It localises to the plastid. Its subcellular location is the chloroplast. It catalyses the reaction 2 (2R)-3-phosphoglycerate + 2 H(+) = D-ribulose 1,5-bisphosphate + CO2 + H2O. The catalysed reaction is D-ribulose 1,5-bisphosphate + O2 = 2-phosphoglycolate + (2R)-3-phosphoglycerate + 2 H(+). Its function is as follows. RuBisCO catalyzes two reactions: the carboxylation of D-ribulose 1,5-bisphosphate, the primary event in carbon dioxide fixation, as well as the oxidative fragmentation of the pentose substrate in the photorespiration process. Both reactions occur simultaneously and in competition at the same active site. The polypeptide is Ribulose bisphosphate carboxylase large chain (Euglena myxocylindracea).